Reading from the N-terminus, the 365-residue chain is tRNA(Met) cytidine acetate ligase (365 aa).

Residues 7–20 (IAEFNPFHNGHKYL), Gly96, Asn152, and Arg175 each bind ATP.

The protein belongs to the TmcAL family.

It localises to the cytoplasm. The catalysed reaction is cytidine(34) in elongator tRNA(Met) + acetate + ATP = N(4)-acetylcytidine(34) in elongator tRNA(Met) + AMP + diphosphate. Catalyzes the formation of N(4)-acetylcytidine (ac(4)C) at the wobble position of elongator tRNA(Met), using acetate and ATP as substrates. First activates an acetate ion to form acetyladenylate (Ac-AMP) and then transfers the acetyl group to tRNA to form ac(4)C34. This Streptococcus pneumoniae (strain ATCC 700669 / Spain 23F-1) protein is tRNA(Met) cytidine acetate ligase.